Here is a 312-residue protein sequence, read N- to C-terminus: Prephenate dehydratase (312 aa).

The region spanning 3–194 (GIAYLGPEGT…ARTRFVLVGR (192 aa)) is the Prephenate dehydratase domain. The ACT domain occupies 208 to 285 (SVVLQLDNVP…ADVRYLGSWP (78 aa)). Residues 291–312 (GAAPPPMDESASWLEGLREGRP) are disordered.

As to quaternary structure, homodimer.

It catalyses the reaction prephenate + H(+) = 3-phenylpyruvate + CO2 + H2O. Its pathway is amino-acid biosynthesis; L-phenylalanine biosynthesis; phenylpyruvate from prephenate: step 1/1. The sequence is that of Prephenate dehydratase (pheA) from Mycolicibacterium vanbaalenii (strain DSM 7251 / JCM 13017 / BCRC 16820 / KCTC 9966 / NRRL B-24157 / PYR-1) (Mycobacterium vanbaalenii).